Here is a 165-residue protein sequence, read N- to C-terminus: SsrA-binding protein (165 aa).

The interval 141-165 (EDRRHAIAERETKREMDREISRRRR) is disordered.

This sequence belongs to the SmpB family.

It is found in the cytoplasm. Required for rescue of stalled ribosomes mediated by trans-translation. Binds to transfer-messenger RNA (tmRNA), required for stable association of tmRNA with ribosomes. tmRNA and SmpB together mimic tRNA shape, replacing the anticodon stem-loop with SmpB. tmRNA is encoded by the ssrA gene; the 2 termini fold to resemble tRNA(Ala) and it encodes a 'tag peptide', a short internal open reading frame. During trans-translation Ala-aminoacylated tmRNA acts like a tRNA, entering the A-site of stalled ribosomes, displacing the stalled mRNA. The ribosome then switches to translate the ORF on the tmRNA; the nascent peptide is terminated with the 'tag peptide' encoded by the tmRNA and targeted for degradation. The ribosome is freed to recommence translation, which seems to be the essential function of trans-translation. This chain is SsrA-binding protein, found in Anaeromyxobacter sp. (strain Fw109-5).